We begin with the raw amino-acid sequence, 344 residues long: DnaJ homolog subfamily C member 25 (344 aa).

Residues 5–25 (WVLLVALSVLFLSGRAGALTE) traverse the membrane as a helical segment. The region spanning 33–108 (VCYDVLGVSR…ETRKDYDYML (76 aa)) is the J domain. 2 consecutive transmembrane segments (helical) span residues 134–154 (IVIL…WWSS) and 228–248 (ILLF…SWYV).

The protein belongs to the DNAJC25 family.

Its subcellular location is the membrane. This Xenopus laevis (African clawed frog) protein is DnaJ homolog subfamily C member 25 (dnajc25).